Consider the following 206-residue polypeptide: Large ribosomal subunit protein bL9 (206 aa).

The disordered stretch occupies residues 182–206 (FAENQQKALAKEMNDNDANSINEEA). Over residues 197–206 (NDANSINEEA) the composition is skewed to polar residues.

It belongs to the bacterial ribosomal protein bL9 family.

Its function is as follows. Binds to the 23S rRNA. The chain is Large ribosomal subunit protein bL9 from Bartonella henselae (strain ATCC 49882 / DSM 28221 / CCUG 30454 / Houston 1) (Rochalimaea henselae).